Here is a 453-residue protein sequence, read N- to C-terminus: Ribulose bisphosphate carboxylase large chain (453 aa).

Positions 1 to 2 (MS) are excised as a propeptide. At P3 the chain carries N-acetylproline. K14 carries the post-translational modification N6,N6,N6-trimethyllysine. Residues N123 and T173 each contribute to the substrate site. K175 acts as the Proton acceptor in catalysis. Residue K177 participates in substrate binding. 3 residues coordinate Mg(2+): K201, D203, and E204. At K201 the chain carries N6-carboxylysine. The active-site Proton acceptor is the H294. Substrate contacts are provided by R295, H327, and S379.

It belongs to the RuBisCO large chain family. Type I subfamily. Heterohexadecamer of 8 large chains and 8 small chains; disulfide-linked. The disulfide link is formed within the large subunit homodimers. Mg(2+) serves as cofactor. Post-translationally, the disulfide bond which can form in the large chain dimeric partners within the hexadecamer appears to be associated with oxidative stress and protein turnover.

It localises to the plastid. Its subcellular location is the chloroplast. It catalyses the reaction 2 (2R)-3-phosphoglycerate + 2 H(+) = D-ribulose 1,5-bisphosphate + CO2 + H2O. It carries out the reaction D-ribulose 1,5-bisphosphate + O2 = 2-phosphoglycolate + (2R)-3-phosphoglycerate + 2 H(+). Functionally, ruBisCO catalyzes two reactions: the carboxylation of D-ribulose 1,5-bisphosphate, the primary event in carbon dioxide fixation, as well as the oxidative fragmentation of the pentose substrate in the photorespiration process. Both reactions occur simultaneously and in competition at the same active site. In Galium corsicum, this protein is Ribulose bisphosphate carboxylase large chain.